The sequence spans 337 residues: Glyceraldehyde-3-phosphate dehydrogenase (337 aa).

NAD(+)-binding positions include 12–13, D34, and R79; that span reads RI. Residues 150-152, T181, 210-211, and R233 contribute to the D-glyceraldehyde 3-phosphate site; these read SCT and TG. C151 serves as the catalytic Nucleophile. N315 serves as a coordination point for NAD(+).

The protein belongs to the glyceraldehyde-3-phosphate dehydrogenase family. In terms of assembly, homotetramer.

Its subcellular location is the cytoplasm. The enzyme catalyses D-glyceraldehyde 3-phosphate + phosphate + NAD(+) = (2R)-3-phospho-glyceroyl phosphate + NADH + H(+). It functions in the pathway carbohydrate degradation; glycolysis; pyruvate from D-glyceraldehyde 3-phosphate: step 1/5. This Ajellomyces capsulatus (Darling's disease fungus) protein is Glyceraldehyde-3-phosphate dehydrogenase (GPD).